The primary structure comprises 386 residues: 1-deoxy-D-xylulose 5-phosphate reductoisomerase (386 aa).

NADPH-binding residues include S10, G11, S12, V13, N38, and N120. Residue K121 coordinates 1-deoxy-D-xylulose 5-phosphate. E122 contacts NADPH. Residue D146 participates in Mn(2+) binding. 1-deoxy-D-xylulose 5-phosphate-binding residues include S147, E148, S172, and H195. Mn(2+) is bound at residue E148. G201 provides a ligand contact to NADPH. The 1-deoxy-D-xylulose 5-phosphate site is built by S208, N213, K214, and E217. E217 lines the Mn(2+) pocket.

The protein belongs to the DXR family. It depends on Mg(2+) as a cofactor. Requires Mn(2+) as cofactor.

It catalyses the reaction 2-C-methyl-D-erythritol 4-phosphate + NADP(+) = 1-deoxy-D-xylulose 5-phosphate + NADPH + H(+). It functions in the pathway isoprenoid biosynthesis; isopentenyl diphosphate biosynthesis via DXP pathway; isopentenyl diphosphate from 1-deoxy-D-xylulose 5-phosphate: step 1/6. Catalyzes the NADPH-dependent rearrangement and reduction of 1-deoxy-D-xylulose-5-phosphate (DXP) to 2-C-methyl-D-erythritol 4-phosphate (MEP). In Leptospira biflexa serovar Patoc (strain Patoc 1 / Ames), this protein is 1-deoxy-D-xylulose 5-phosphate reductoisomerase.